Here is a 397-residue protein sequence, read N- to C-terminus: P2X purinoceptor 3 (397 aa).

Over 1–20 (MNCISDFFTYETTKSVVVKS) the chain is Cytoplasmic. The chain crosses the membrane as a helical span at residues 21–43 (WTIGIINRAVQLLIISYFVGWVF). Topologically, residues 44-322 (LHEKAYQVRD…AGKFNIIPTI (279 aa)) are extracellular. Positions 63 and 65 each coordinate ATP. 3 disulfide bridges follow: cysteine 107–cysteine 153, cysteine 116–cysteine 137, and cysteine 122–cysteine 147. Glutamate 111 serves as a coordination point for Mg(2+). Asparagine 139 carries an N-linked (GlcNAc...) asparagine glycan. Aspartate 158 is a Mg(2+) binding site. Aspartate 158 is a binding site for Ca(2+). A glycan (N-linked (GlcNAc...) asparagine) is linked at asparagine 170. ATP is bound at residue threonine 172. Asparagine 194 is a glycosylation site (N-linked (GlcNAc...) asparagine). 2 disulfides stabilise this stretch: cysteine 203/cysteine 213 and cysteine 247/cysteine 256. ATP contacts are provided by serine 275, asparagine 279, and arginine 281. Asparagine 290 is a glycosylation site (N-linked (GlcNAc...) asparagine). Lysine 299 is an ATP binding site. A helical membrane pass occupies residues 323-341 (ISSVAAFTSVGVGTVLCDI). Topologically, residues 342–397 (ILLNFLKGADHYKARKFEEVTETTLKGTASTNPVFASDQATVEKQSTDSGAYSIGH) are cytoplasmic.

This sequence belongs to the P2X receptor family. In terms of assembly, homotrimer. Forms heterotrimer with P2RX2. Heterotrimeric P2RX2/3 has a ligand dose-response profile that is distinct from either homotrimeric P2RX2 or P2RX3. In terms of tissue distribution, selectively expressed in sensory ganglia.

Its subcellular location is the cell membrane. It catalyses the reaction Ca(2+)(in) = Ca(2+)(out). The enzyme catalyses Na(+)(in) = Na(+)(out). Its activity is regulated as follows. Has high sensitivity to ATP. Fast activation by external ATP. Exhibits rapid desensitization. Sensitives to the ATP agonist:alpha/beta-methylene-ATP. Subject to allosteric inhibition by AF-219. Mg(2+) and Ca(2+) slow deactivation of P2RX3. Functionally, extracellular ATP-activated non-selective cation channel. Plays particularly important role in sensory neurons where its activation is critical for gustatory, nociceptive responses, visceral reflexes and sensory hypersensitization. This chain is P2X purinoceptor 3 (P2rx3), found in Rattus norvegicus (Rat).